The primary structure comprises 501 residues: 2,3-bisphosphoglycerate-independent phosphoglycerate mutase (501 aa).

Residues Asp-12 and Ser-62 each coordinate Mn(2+). Ser-62 acts as the Phosphoserine intermediate in catalysis. Substrate contacts are provided by residues His-121, 150–151 (RD), Arg-182, Arg-188, 253–256 (RSDR), and Lys-322. Mn(2+) contacts are provided by Asp-389, His-393, Asp-430, His-431, and His-449.

The protein belongs to the BPG-independent phosphoglycerate mutase family. In terms of assembly, monomer. The cofactor is Mn(2+).

It catalyses the reaction (2R)-2-phosphoglycerate = (2R)-3-phosphoglycerate. Its pathway is carbohydrate degradation; glycolysis; pyruvate from D-glyceraldehyde 3-phosphate: step 3/5. In terms of biological role, catalyzes the interconversion of 2-phosphoglycerate and 3-phosphoglycerate. This is 2,3-bisphosphoglycerate-independent phosphoglycerate mutase from Ehrlichia ruminantium (strain Gardel).